A 214-amino-acid chain; its full sequence is Large ribosomal subunit protein uL3 (214 aa).

Polar residues predominate over residues Ser-132–Ala-145. A disordered region spans residues Ser-132–Pro-155. At Gln-153 the chain carries N5-methylglutamine.

The protein belongs to the universal ribosomal protein uL3 family. In terms of assembly, part of the 50S ribosomal subunit. Forms a cluster with proteins L14 and L19. Methylated by PrmB.

In terms of biological role, one of the primary rRNA binding proteins, it binds directly near the 3'-end of the 23S rRNA, where it nucleates assembly of the 50S subunit. The chain is Large ribosomal subunit protein uL3 from Laribacter hongkongensis (strain HLHK9).